The following is a 339-amino-acid chain: Transcription initiation factor IIB (339 aa).

The TFIIB-type zinc finger occupies 39-70 (EELICPVCGSKNIIKDYERAEIVCEMCGCVLQ). Zn(2+)-binding residues include C43, C46, C62, and C65. Tandem repeats lie at residues 156–239 (SELD…SREL) and 250–331 (DYVP…ELTE).

This sequence belongs to the TFIIB family.

In terms of biological role, stabilizes TBP binding to an archaeal box-A promoter. Also responsible for recruiting RNA polymerase II to the pre-initiation complex (DNA-TBP-TFIIB). The polypeptide is Transcription initiation factor IIB (Methanococcus maripaludis (strain C6 / ATCC BAA-1332)).